Here is a 369-residue protein sequence, read N- to C-terminus: D-glucosaminate-6-phosphate ammonia lyase (369 aa).

Residue Lys-213 is modified to N6-(pyridoxal phosphate)lysine.

Belongs to the SelA family. Requires pyridoxal 5'-phosphate as cofactor.

It carries out the reaction 2-amino-2-deoxy-D-gluconate 6-phosphate = 2-dehydro-3-deoxy-6-phospho-D-gluconate + NH4(+). Involved in the catabolism of D-glucosaminate. Catalyzes the conversion of D-glucosaminate 6-phosphate to yield keto-3-deoxygluconate 6-phosphate (KDGP). The protein is D-glucosaminate-6-phosphate ammonia lyase of Salmonella typhimurium (strain 14028s / SGSC 2262).